Reading from the N-terminus, the 383-residue chain is UDP-N-acetylglucosamine--N-acetylmuramyl-(pentapeptide) pyrophosphoryl-undecaprenol N-acetylglucosamine transferase (383 aa).

Residues 11 to 13 (TGG), Asn-125, Arg-166, Ser-191, Ile-246, and Gln-291 contribute to the UDP-N-acetyl-alpha-D-glucosamine site. The disordered stretch occupies residues 364-383 (PNGRERTPIEAEKKAPRSNS). The span at 366 to 383 (GRERTPIEAEKKAPRSNS) shows a compositional bias: basic and acidic residues.

This sequence belongs to the glycosyltransferase 28 family. MurG subfamily.

The protein localises to the cell inner membrane. It carries out the reaction di-trans,octa-cis-undecaprenyl diphospho-N-acetyl-alpha-D-muramoyl-L-alanyl-D-glutamyl-meso-2,6-diaminopimeloyl-D-alanyl-D-alanine + UDP-N-acetyl-alpha-D-glucosamine = di-trans,octa-cis-undecaprenyl diphospho-[N-acetyl-alpha-D-glucosaminyl-(1-&gt;4)]-N-acetyl-alpha-D-muramoyl-L-alanyl-D-glutamyl-meso-2,6-diaminopimeloyl-D-alanyl-D-alanine + UDP + H(+). The protein operates within cell wall biogenesis; peptidoglycan biosynthesis. Functionally, cell wall formation. Catalyzes the transfer of a GlcNAc subunit on undecaprenyl-pyrophosphoryl-MurNAc-pentapeptide (lipid intermediate I) to form undecaprenyl-pyrophosphoryl-MurNAc-(pentapeptide)GlcNAc (lipid intermediate II). This is UDP-N-acetylglucosamine--N-acetylmuramyl-(pentapeptide) pyrophosphoryl-undecaprenol N-acetylglucosamine transferase from Myxococcus xanthus (strain DK1622).